Reading from the N-terminus, the 579-residue chain is Adenine deaminase (579 aa).

This sequence belongs to the metallo-dependent hydrolases superfamily. Adenine deaminase family. Mn(2+) is required as a cofactor.

The enzyme catalyses adenine + H2O + H(+) = hypoxanthine + NH4(+). The chain is Adenine deaminase from Listeria monocytogenes serotype 4b (strain F2365).